Here is a 98-residue protein sequence, read N- to C-terminus: Citrate lyase acyl carrier protein (98 aa).

O-(phosphoribosyl dephospho-coenzyme A)serine is present on S14.

It belongs to the CitD family. In terms of assembly, oligomer with a subunit composition of (alpha,beta,gamma)6.

It localises to the cytoplasm. Covalent carrier of the coenzyme of citrate lyase. The protein is Citrate lyase acyl carrier protein of Salmonella arizonae (strain ATCC BAA-731 / CDC346-86 / RSK2980).